A 332-amino-acid polypeptide reads, in one-letter code: Holliday junction branch migration complex subunit RuvB (332 aa).

The tract at residues 1–181 is large ATPase domain (RuvB-L); it reads MSRILDNELM…FGITGHMEYY (181 aa). Residues leucine 20, arginine 21, glycine 62, lysine 65, threonine 66, threonine 67, 128 to 130, arginine 171, tyrosine 181, and arginine 218 contribute to the ATP site; that span reads EDF. Mg(2+) is bound at residue threonine 66. Residues 182 to 252 form a small ATPAse domain (RuvB-S) region; the sequence is EAGDLTEIVE…ITDQALSMLD (71 aa). Positions 255–332 are head domain (RuvB-H); the sequence is QEGLDYVDQK…EHLGYEYMKE (78 aa). DNA-binding residues include arginine 291, arginine 310, arginine 312, and arginine 315.

This sequence belongs to the RuvB family. As to quaternary structure, homohexamer. Forms an RuvA(8)-RuvB(12)-Holliday junction (HJ) complex. HJ DNA is sandwiched between 2 RuvA tetramers; dsDNA enters through RuvA and exits via RuvB. An RuvB hexamer assembles on each DNA strand where it exits the tetramer. Each RuvB hexamer is contacted by two RuvA subunits (via domain III) on 2 adjacent RuvB subunits; this complex drives branch migration. In the full resolvosome a probable DNA-RuvA(4)-RuvB(12)-RuvC(2) complex forms which resolves the HJ.

Its subcellular location is the cytoplasm. It catalyses the reaction ATP + H2O = ADP + phosphate + H(+). The RuvA-RuvB-RuvC complex processes Holliday junction (HJ) DNA during genetic recombination and DNA repair, while the RuvA-RuvB complex plays an important role in the rescue of blocked DNA replication forks via replication fork reversal (RFR). RuvA specifically binds to HJ cruciform DNA, conferring on it an open structure. The RuvB hexamer acts as an ATP-dependent pump, pulling dsDNA into and through the RuvAB complex. RuvB forms 2 homohexamers on either side of HJ DNA bound by 1 or 2 RuvA tetramers; 4 subunits per hexamer contact DNA at a time. Coordinated motions by a converter formed by DNA-disengaged RuvB subunits stimulates ATP hydrolysis and nucleotide exchange. Immobilization of the converter enables RuvB to convert the ATP-contained energy into a lever motion, pulling 2 nucleotides of DNA out of the RuvA tetramer per ATP hydrolyzed, thus driving DNA branch migration. The RuvB motors rotate together with the DNA substrate, which together with the progressing nucleotide cycle form the mechanistic basis for DNA recombination by continuous HJ branch migration. Branch migration allows RuvC to scan DNA until it finds its consensus sequence, where it cleaves and resolves cruciform DNA. The chain is Holliday junction branch migration complex subunit RuvB from Streptococcus sanguinis (strain SK36).